The sequence spans 88 residues: UPF0297 protein Ccel_2240 (88 aa).

This sequence belongs to the UPF0297 family.

The polypeptide is UPF0297 protein Ccel_2240 (Ruminiclostridium cellulolyticum (strain ATCC 35319 / DSM 5812 / JCM 6584 / H10) (Clostridium cellulolyticum)).